The chain runs to 377 residues: Glutamate 5-kinase (377 aa).

Residue lysine 20 coordinates ATP. Residues serine 60, aspartate 147, and asparagine 159 each coordinate substrate. Position 179–180 (179–180 (SD)) interacts with ATP. The region spanning 281-355 (HGQLHLDAGA…GQSTSDLPEF (75 aa)) is the PUA domain.

This sequence belongs to the glutamate 5-kinase family.

The protein localises to the cytoplasm. It carries out the reaction L-glutamate + ATP = L-glutamyl 5-phosphate + ADP. The protein operates within amino-acid biosynthesis; L-proline biosynthesis; L-glutamate 5-semialdehyde from L-glutamate: step 1/2. Functionally, catalyzes the transfer of a phosphate group to glutamate to form L-glutamate 5-phosphate. The chain is Glutamate 5-kinase from Corynebacterium jeikeium (strain K411).